The sequence spans 435 residues: 3-ketoacyl-CoA thiolase (435 aa).

The Acyl-thioester intermediate role is filled by Cys-98. Residues His-391 and Cys-421 each act as proton acceptor in the active site.

Belongs to the thiolase-like superfamily. Thiolase family. In terms of assembly, heterotetramer of two alpha chains (FadJ) and two beta chains (FadI).

Its subcellular location is the cytoplasm. The enzyme catalyses an acyl-CoA + acetyl-CoA = a 3-oxoacyl-CoA + CoA. It functions in the pathway lipid metabolism; fatty acid beta-oxidation. In terms of biological role, catalyzes the final step of fatty acid oxidation in which acetyl-CoA is released and the CoA ester of a fatty acid two carbons shorter is formed. The polypeptide is 3-ketoacyl-CoA thiolase (Vibrio parahaemolyticus serotype O3:K6 (strain RIMD 2210633)).